A 174-amino-acid polypeptide reads, in one-letter code: Ly6/PLAUR domain-containing protein 6 (174 aa).

An N-terminal signal peptide occupies residues 1-22 (MEPWPLMAWGLMLTAITGWIKA). One can recognise a UPAR/Ly6 domain in the interval 47–141 (FKCFTCEDAP…PRNETDAIFS (95 aa)). 6 cysteine pairs are disulfide-bonded: Cys49–Cys77, Cys52–Cys61, Cys70–Cys96, Cys102–Cys121, Cys107–Cys118, and Cys122–Cys127. 2 N-linked (GlcNAc...) asparagine glycosylation sites follow: Asn134 and Asn147. A lipid anchor (GPI-anchor amidated serine) is attached at Ser149. Residues 150–174 (AQSTQTLPLLLLSVSITSLMLHSIN) constitute a propeptide, removed in mature form.

As to quaternary structure, interacts with fzd8 and lrp6.

The protein localises to the cell membrane. Its subcellular location is the membrane raft. Acts as an important regulator of embryogenesis through its enhancement of Wnt/beta-catenin signaling. Positively regulates Wnt/beta-catenin signaling by ensuring phosphorylation of lrp6 specifically in plasma membrane rafts and its subsequent internalization into signaling-competent vesicles. Essential for the wnt8-mediated patterning of the mesoderm and neuroectoderm during gastrulation. The polypeptide is Ly6/PLAUR domain-containing protein 6 (lypd6) (Danio rerio (Zebrafish)).